We begin with the raw amino-acid sequence, 541 residues long: Chaperonin GroEL 2 (541 aa).

ATP-binding positions include 29–32 (TLGP), 86–90 (DGTTT), G413, 476–478 (NAA), and D492.

This sequence belongs to the chaperonin (HSP60) family. As to quaternary structure, forms a cylinder of 14 subunits composed of two heptameric rings stacked back-to-back. Interacts with the co-chaperonin GroES.

The protein localises to the secreted. It localises to the capsule. Its subcellular location is the cell surface. It is found in the cell wall. It carries out the reaction ATP + H2O + a folded polypeptide = ADP + phosphate + an unfolded polypeptide.. Its function is as follows. Together with its co-chaperonin GroES, plays an essential role in assisting protein folding. The GroEL-GroES system forms a nano-cage that allows encapsulation of the non-native substrate proteins and provides a physical environment optimized to promote and accelerate protein folding. This Mycobacterium ulcerans (strain Agy99) protein is Chaperonin GroEL 2.